The primary structure comprises 153 residues: MSQARTLHRLIAPAVEALGFELVGCELFRRGATRILQVFVDKPGGIGLDECAKVSRQISAVLDVEDPIRGRYTLEVSSPGLERPLYTANHYRRFIGNKAKIRLREPREGQRQFRGMIVAVDNEEQVTLQLDNKILKVPLGEIEKANLIADFEG.

It belongs to the RimP family.

It localises to the cytoplasm. Functionally, required for maturation of 30S ribosomal subunits. The chain is Ribosome maturation factor RimP from Coxiella burnetii (strain Dugway 5J108-111).